Here is a 481-residue protein sequence, read N- to C-terminus: tRNA-2-methylthio-N(6)-dimethylallyladenosine synthase (481 aa).

The MTTase N-terminal domain maps to 24–140; that stretch reads KKLFIESYGC…LPNLLAEVEE (117 aa). [4Fe-4S] cluster contacts are provided by Cys33, Cys69, Cys103, Cys178, Cys182, and Cys185. In terms of domain architecture, Radical SAM core spans 164 to 411; that stretch reads MSNGITALVS…DLQQKHAWFR (248 aa). Residues 413–476 form the TRAM domain; sequence EEFVGKTVEV…SGTLKGEAVG (64 aa).

Belongs to the methylthiotransferase family. MiaB subfamily. In terms of assembly, monomer. It depends on [4Fe-4S] cluster as a cofactor.

It localises to the cytoplasm. It catalyses the reaction N(6)-dimethylallyladenosine(37) in tRNA + (sulfur carrier)-SH + AH2 + 2 S-adenosyl-L-methionine = 2-methylsulfanyl-N(6)-dimethylallyladenosine(37) in tRNA + (sulfur carrier)-H + 5'-deoxyadenosine + L-methionine + A + S-adenosyl-L-homocysteine + 2 H(+). In terms of biological role, catalyzes the methylthiolation of N6-(dimethylallyl)adenosine (i(6)A), leading to the formation of 2-methylthio-N6-(dimethylallyl)adenosine (ms(2)i(6)A) at position 37 in tRNAs that read codons beginning with uridine. This Flavobacterium johnsoniae (strain ATCC 17061 / DSM 2064 / JCM 8514 / BCRC 14874 / CCUG 350202 / NBRC 14942 / NCIMB 11054 / UW101) (Cytophaga johnsonae) protein is tRNA-2-methylthio-N(6)-dimethylallyladenosine synthase.